The following is a 470-amino-acid chain: Neuraminidase (470 aa).

Over 1–14 (MNPNQKIIAIGSAS) the chain is Intravirion. An involved in apical transport and lipid raft association region spans residues 11–32 (GSASLGILILNVILHVVSIIVT). Residues 15–35 (LGILILNVILHVVSIIVTVLV) form a helical membrane-spanning segment. The segment at 32 to 86 (TVLVLNNNGTGLNCNRTIIREYNETVRVERITQWYNTSTIEYIERPSNEYYMNNT) is hypervariable stalk region. Topologically, residues 36 to 470 (LNNNGTGLNC…AILPFDIDKM (435 aa)) are virion surface. Asparagine 39, asparagine 46, asparagine 54, asparagine 67, and asparagine 84 each carry an N-linked (GlcNAc...) asparagine; by host glycan. Residues 89 to 470 (LCEAQGFAPF…AILPFDIDKM (382 aa)) are head of neuraminidase. 8 disulfides stabilise this stretch: cysteine 90-cysteine 417, cysteine 122-cysteine 127, cysteine 182-cysteine 229, cysteine 231-cysteine 236, cysteine 277-cysteine 290, cysteine 279-cysteine 288, cysteine 316-cysteine 335, and cysteine 421-cysteine 446. Residue arginine 116 coordinates substrate. Residue asparagine 144 is glycosylated (N-linked (GlcNAc...) asparagine; by host). Aspartate 149 serves as the catalytic Proton donor/acceptor. Arginine 150 serves as a coordination point for substrate. 275–276 (EE) lines the substrate pocket. Residue arginine 291 coordinates substrate. Aspartate 292 is a binding site for Ca(2+). A glycan (N-linked (GlcNAc...) asparagine; by host) is linked at asparagine 293. Positions 296 and 322 each coordinate Ca(2+). Substrate is bound at residue arginine 368. A glycan (N-linked (GlcNAc...) asparagine; by host) is linked at asparagine 398. Catalysis depends on tyrosine 402, which acts as the Nucleophile.

Belongs to the glycosyl hydrolase 34 family. In terms of assembly, homotetramer. It depends on Ca(2+) as a cofactor. In terms of processing, N-glycosylated.

It is found in the virion membrane. It localises to the host apical cell membrane. It carries out the reaction Hydrolysis of alpha-(2-&gt;3)-, alpha-(2-&gt;6)-, alpha-(2-&gt;8)- glycosidic linkages of terminal sialic acid residues in oligosaccharides, glycoproteins, glycolipids, colominic acid and synthetic substrates.. With respect to regulation, inhibited by the neuraminidase inhibitors zanamivir (Relenza) and oseltamivir (Tamiflu). These drugs interfere with the release of progeny virus from infected cells and are effective against all influenza strains. Resistance to neuraminidase inhibitors is quite rare. Its function is as follows. Catalyzes the removal of terminal sialic acid residues from viral and cellular glycoconjugates. Cleaves off the terminal sialic acids on the glycosylated HA during virus budding to facilitate virus release. Additionally helps virus spread through the circulation by further removing sialic acids from the cell surface. These cleavages prevent self-aggregation and ensure the efficient spread of the progeny virus from cell to cell. Otherwise, infection would be limited to one round of replication. Described as a receptor-destroying enzyme because it cleaves a terminal sialic acid from the cellular receptors. May facilitate viral invasion of the upper airways by cleaving the sialic acid moieties on the mucin of the airway epithelial cells. Likely to plays a role in the budding process through its association with lipid rafts during intracellular transport. May additionally display a raft-association independent effect on budding. Plays a role in the determination of host range restriction on replication and virulence. Sialidase activity in late endosome/lysosome traffic seems to enhance virus replication. This Aves (Horse) protein is Neuraminidase.